The following is a 688-amino-acid chain: G protein-coupled receptor kinase 3 (688 aa).

Residues 1 to 190 form an N-terminal region; sequence MADLEAVLAD…ELNIHLTMND (190 aa). The region spanning 54-175 is the RGS domain; the sequence is TFDKIFNQRI…MESDKFTRFC (122 aa). One can recognise a Protein kinase domain in the interval 191 to 453; it reads FSVHRIIGRG…AQELKTHDFF (263 aa). Residues 197-205 and K220 each bind ATP; that span reads IGRGGFGEV. The active-site Proton acceptor is D317. The AGC-kinase C-terminal domain maps to 454–521; it reads RGIDWQHVYL…VISERWQQEV (68 aa). One can recognise a PH domain in the interval 558-652; it reads DCIVHGYMLK…WKKELTETFM (95 aa).

The protein belongs to the protein kinase superfamily. AGC Ser/Thr protein kinase family. GPRK subfamily. As to quaternary structure, interacts with GIT1. In terms of processing, ubiquitinated. In terms of tissue distribution, ubiquitous; brain, spleen &gt; heart, lung &gt; kidney.

The protein resides in the postsynapse. It is found in the presynapse. The enzyme catalyses [beta-adrenergic receptor] + ATP = [beta-adrenergic receptor]-phosphate + ADP + H(+). In terms of biological role, specifically phosphorylates the agonist-occupied form of the beta-adrenergic and closely related receptors. The chain is G protein-coupled receptor kinase 3 from Bos taurus (Bovine).